Consider the following 456-residue polypeptide: Protein MGA1 (456 aa).

The DNA-binding element occupies 3–118; the sequence is PKTFVHQLHA…ILNKIQRKST (116 aa). Residues 229-299 are disordered; it reads SIVQPQQPQQ…QPLPTVPPYS (71 aa). Low complexity-rich tracts occupy residues 231–246, 253–267, and 283–299; these read VQPQQPQQVLSPQALS, SGTLSSTDDLKTTSL, and QQQQQQQQPLPTVPPYS.

Belongs to the HSF family.

It localises to the nucleus. The protein is Protein MGA1 (MGA1) of Saccharomyces cerevisiae (strain ATCC 204508 / S288c) (Baker's yeast).